The sequence spans 374 residues: Queuine tRNA-ribosyltransferase (374 aa).

Asp89 (proton acceptor) is an active-site residue. Substrate contacts are provided by residues 89–93, Asp143, Gln187, and Gly214; that span reads DSGGF. Residues 245-251 are RNA binding; sequence GVGKPED. The Nucleophile role is filled by Asp264. The tract at residues 269-273 is RNA binding; important for wobble base 34 recognition; sequence TRNAR. Zn(2+) is bound by residues Cys302, Cys304, Cys307, and His333.

The protein belongs to the queuine tRNA-ribosyltransferase family. In terms of assembly, homodimer. Within each dimer, one monomer is responsible for RNA recognition and catalysis, while the other monomer binds to the replacement base PreQ1. It depends on Zn(2+) as a cofactor.

It carries out the reaction 7-aminomethyl-7-carbaguanine + guanosine(34) in tRNA = 7-aminomethyl-7-carbaguanosine(34) in tRNA + guanine. It functions in the pathway tRNA modification; tRNA-queuosine biosynthesis. Catalyzes the base-exchange of a guanine (G) residue with the queuine precursor 7-aminomethyl-7-deazaguanine (PreQ1) at position 34 (anticodon wobble position) in tRNAs with GU(N) anticodons (tRNA-Asp, -Asn, -His and -Tyr). Catalysis occurs through a double-displacement mechanism. The nucleophile active site attacks the C1' of nucleotide 34 to detach the guanine base from the RNA, forming a covalent enzyme-RNA intermediate. The proton acceptor active site deprotonates the incoming PreQ1, allowing a nucleophilic attack on the C1' of the ribose to form the product. After dissociation, two additional enzymatic reactions on the tRNA convert PreQ1 to queuine (Q), resulting in the hypermodified nucleoside queuosine (7-(((4,5-cis-dihydroxy-2-cyclopenten-1-yl)amino)methyl)-7-deazaguanosine). The protein is Queuine tRNA-ribosyltransferase of Yersinia pseudotuberculosis serotype O:1b (strain IP 31758).